The following is a 201-amino-acid chain: Recombination protein RecR (201 aa).

A C4-type zinc finger spans residues 60–75; the sequence is CKVCGNIDTQNPCTVC. The Toprim domain maps to 83–178; sequence SIIVVVADVA…KVTRLAHGVP (96 aa).

It belongs to the RecR family.

Its function is as follows. May play a role in DNA repair. It seems to be involved in an RecBC-independent recombinational process of DNA repair. It may act with RecF and RecO. In Rhodopseudomonas palustris (strain BisB18), this protein is Recombination protein RecR.